Here is a 123-residue protein sequence, read N- to C-terminus: Integration host factor subunit alpha (123 aa).

This sequence belongs to the bacterial histone-like protein family. In terms of assembly, heterodimer of an alpha and a beta chain.

Its function is as follows. This protein is one of the two subunits of integration host factor, a specific DNA-binding protein that functions in genetic recombination as well as in transcriptional and translational control. This Polaromonas naphthalenivorans (strain CJ2) protein is Integration host factor subunit alpha.